The chain runs to 330 residues: Phosphate acyltransferase (330 aa).

Belongs to the PlsX family. As to quaternary structure, homodimer. Probably interacts with PlsY.

It localises to the cytoplasm. It carries out the reaction a fatty acyl-[ACP] + phosphate = an acyl phosphate + holo-[ACP]. It participates in lipid metabolism; phospholipid metabolism. Functionally, catalyzes the reversible formation of acyl-phosphate (acyl-PO(4)) from acyl-[acyl-carrier-protein] (acyl-ACP). This enzyme utilizes acyl-ACP as fatty acyl donor, but not acyl-CoA. This Bacillus licheniformis (strain ATCC 14580 / DSM 13 / JCM 2505 / CCUG 7422 / NBRC 12200 / NCIMB 9375 / NCTC 10341 / NRRL NRS-1264 / Gibson 46) protein is Phosphate acyltransferase.